Here is a 219-residue protein sequence, read N- to C-terminus: Ras-related protein Rab-3B (219 aa).

Alanine 2 is modified (N-acetylalanine). GTP is bound by residues serine 31, serine 32, valine 33, glycine 34, lysine 35, threonine 36, serine 37, proline 49, and serine 53. Threonine 36 provides a ligand contact to Mg(2+). Residues 45–58 carry the Switch 1 motif; it reads DTFTPAFVSTVGID. 2 residues coordinate Mg(2+): threonine 54 and aspartate 77. Positions 78-96 match the Switch 2 motif; the sequence is TAGQERYRTITTAYYRGAM. A GTP-binding site is contributed by glycine 80. The residue at position 86 (threonine 86) is a Phosphothreonine; by LRRK2. 5 residues coordinate GTP: asparagine 135, lysine 136, aspartate 138, alanine 166, and lysine 167. Phosphoserine occurs at positions 188 and 190. Residues cysteine 217 and cysteine 219 are each lipidated (S-geranylgeranyl cysteine). Cysteine 219 is modified (cysteine methyl ester).

The protein belongs to the small GTPase superfamily. Rab family. As to quaternary structure, interacts with RIMS1, RIMS2, RPH3A and RPH3AL. The GTP-bound form interacts with GAS8/DRC4 (via coiled-coil domains). Interacts with GDI2, CHM and CHML; phosphorylation at Thr-86 disrupts these interactions. Interacts with MADD (via uDENN domain); the GTP-bound form is preferred for interaction. Mg(2+) is required as a cofactor. In terms of processing, phosphorylation of Thr-86 in the switch II region by LRRK2 prevents the association of RAB regulatory proteins, including CHM, CHML and RAB GDP dissociation inhibitor GDI2. As to expression, abundantly expressed in testis, lung and brain.

The protein resides in the cell membrane. It localises to the golgi apparatus. The catalysed reaction is GTP + H2O = GDP + phosphate + H(+). Regulated by guanine nucleotide exchange factors (GEFs) which promote the exchange of bound GDP for free GTP. Regulated by GTPase activating proteins (GAPs) which increase the GTP hydrolysis activity. Inhibited by GDP dissociation inhibitors (GDIs) which prevent Rab-GDP dissociation. Functionally, the small GTPases Rab are key regulators of intracellular membrane trafficking, from the formation of transport vesicles to their fusion with membranes. Rabs cycle between an inactive GDP-bound form and an active GTP-bound form that is able to recruit to membranes different sets of downstream effectors directly responsible for vesicle formation, movement, tethering and fusion. This chain is Ras-related protein Rab-3B, found in Mus musculus (Mouse).